We begin with the raw amino-acid sequence, 147 residues long: Phospholipase A2 SSD1043 (147 aa).

The signal sequence occupies residues 1 to 22; that stretch reads MSPKFMFFSIIAVWSCAAVTEA. Residues 23–28 constitute a propeptide that is removed on maturation; that stretch reads LFIQHR. 5 cysteine pairs are disulfide-bonded: C55/C71, C70/C130, C77/C123, C86/C116, and C109/C121. Ca(2+) contacts are provided by G56 and G58. H74 is an active-site residue. D75 contributes to the Ca(2+) binding site. D124 is an active-site residue.

Requires Ca(2+) as cofactor. In terms of tissue distribution, expressed by the venom gland.

The protein resides in the secreted. It catalyses the reaction a 1,2-diacyl-sn-glycero-3-phosphocholine + H2O = a 1-acyl-sn-glycero-3-phosphocholine + a fatty acid + H(+). In terms of biological role, PLA2 catalyzes the calcium-dependent hydrolysis of the 2-acyl groups in 3-sn-phosphoglycerides. This Scolopendra dehaani (Thai centipede) protein is Phospholipase A2 SSD1043.